The sequence spans 334 residues: UDP-N-acetylglucosamine 4,6-dehydratase (inverting) (334 aa).

NADP(+) is bound by residues 13–16, 37–42, 61–62, A81, K85, and 123–124; these read TGSF, SRDELK, DV, and LS. Substrate is bound at residue K85. Residue K127 is part of the active site. Residues Y135 and K139 each coordinate NADP(+). N167 is a binding site for substrate. Position 168–172 (168–172) interacts with NADP(+); sequence VVGSR. Positions 175, 193, 252, and 255 each coordinate substrate.

This sequence belongs to the polysaccharide synthase family. In terms of assembly, homohexamer. The cofactor is NADP(+).

The catalysed reaction is UDP-N-acetyl-alpha-D-glucosamine = UDP-2-acetamido-2,6-dideoxy-beta-L-arabino-hex-4-ulose + H2O. Catalyzes the first step in the biosynthesis of pseudaminic acid, a sialic-acid-like sugar that is used to modify flagellin. Has both C6 dehydratase and C5 epimerase activities that result in the production of both UDP-2-acetamido-2,6-dideoxy-beta-L-arabino-4-hexulose and UDP-2-acetamido-2,6-dideoxy-alpha-D-xylo-4-hexulose. The protein is UDP-N-acetylglucosamine 4,6-dehydratase (inverting) (pseB) of Campylobacter jejuni subsp. jejuni serotype O:23/36 (strain 81-176).